A 1216-amino-acid polypeptide reads, in one-letter code: DNA-directed RNA polymerase subunit beta (1216 aa).

The disordered stretch occupies residues 1185-1216 (EEKQELPSQEYESLNLDQELKTASENVSESEF). The span at 1190 to 1216 (LPSQEYESLNLDQELKTASENVSESEF) shows a compositional bias: polar residues.

The protein belongs to the RNA polymerase beta chain family. In terms of assembly, the RNAP catalytic core consists of 2 alpha, 1 beta, 1 beta' and 1 omega subunit. When a sigma factor is associated with the core the holoenzyme is formed, which can initiate transcription.

The catalysed reaction is RNA(n) + a ribonucleoside 5'-triphosphate = RNA(n+1) + diphosphate. DNA-dependent RNA polymerase catalyzes the transcription of DNA into RNA using the four ribonucleoside triphosphates as substrates. This chain is DNA-directed RNA polymerase subunit beta, found in Mycoplasmopsis pulmonis (strain UAB CTIP) (Mycoplasma pulmonis).